A 416-amino-acid polypeptide reads, in one-letter code: Gamma-glutamyl phosphate reductase (416 aa).

It belongs to the gamma-glutamyl phosphate reductase family.

It localises to the cytoplasm. It catalyses the reaction L-glutamate 5-semialdehyde + phosphate + NADP(+) = L-glutamyl 5-phosphate + NADPH + H(+). It functions in the pathway amino-acid biosynthesis; L-proline biosynthesis; L-glutamate 5-semialdehyde from L-glutamate: step 2/2. Its function is as follows. Catalyzes the NADPH-dependent reduction of L-glutamate 5-phosphate into L-glutamate 5-semialdehyde and phosphate. The product spontaneously undergoes cyclization to form 1-pyrroline-5-carboxylate. The chain is Gamma-glutamyl phosphate reductase from Streptococcus pyogenes serotype M4 (strain MGAS10750).